The chain runs to 165 residues: 3-hydroxyacyl-[acyl-carrier-protein] dehydratase FERN, mitochondrial (165 aa).

Residues 1–35 (MLMKRLFSSSHVFSSSSASSNLLKIGSVLKQARTF) constitute a mitochondrion transit peptide. A MaoC-like domain is found at 36-124 (ADDDVLGYSK…AVSIRQIKNK (89 aa)).

Homodimer.

The protein localises to the mitochondrion. The catalysed reaction is a (3R)-hydroxyacyl-[ACP] = a (2E)-enoyl-[ACP] + H2O. The protein operates within lipid metabolism; fatty acid biosynthesis. Its function is as follows. 3-hydroxyl-[acyl-carrier-protein] (3-hydroxyl-ACP) dehydratase required for mitochondrial fatty acid synthesis (mtFAS). Essential for photorespiration, tomato morphogenesis and plant development, probably by influencing mitochondrial membrane lipid composition and other lipid metabolic pathways, and by contributing to energy supply and reactive oxygen species (ROS) homeostasis. This Solanum lycopersicum (Tomato) protein is 3-hydroxyacyl-[acyl-carrier-protein] dehydratase FERN, mitochondrial.